Here is an 88-residue protein sequence, read N- to C-terminus: Apolipoprotein C-I (88 aa).

An N-terminal signal peptide occupies residues 1-26 (MRLFLSLPVWVAVLAMVLEGPAPAQA).

This sequence belongs to the apolipoprotein C1 family.

It localises to the secreted. In terms of biological role, inhibitor of lipoprotein binding to the low density lipoprotein (LDL) receptor, LDL receptor-related protein, and very low density lipoprotein (VLDL) receptor. Associates with high density lipoproteins (HDL) and the triacylglycerol-rich lipoproteins in the plasma and makes up about 10% of the protein of the VLDL and 2% of that of HDL. Appears to interfere directly with fatty acid uptake and is also the major plasma inhibitor of cholesteryl ester transfer protein (CETP). Binds free fatty acids and reduces their intracellular esterification. Modulates the interaction of APOE with beta-migrating VLDL and inhibits binding of beta-VLDL to the LDL receptor-related protein. The polypeptide is Apolipoprotein C-I (APOC1) (Ursus maritimus (Polar bear)).